A 112-amino-acid polypeptide reads, in one-letter code: Carboxysome shell protein CcmK4 (112 aa).

Residues 6–92 form the BMC domain; that stretch reads AVGSIETIGF…PHENVVAVLP (87 aa).

This sequence belongs to the bacterial microcompartments protein family. CcmK subfamily. Homohexamer. Interacts with full-length CcmM. Forms mixed heterohexamers with CcmK3, probably with 1:5 CcmK3:CcmK4 stoichiometry. Only very weak interactions with CcmK1 and CcmK2 were seen.

It localises to the carboxysome. Its function is as follows. A probably minor shell protein component of the carboxysome, a polyhedral inclusion where RuBisCO (ribulose bisphosphate carboxylase, rbcL-rbcS) is sequestered. The central pore probably regulates metabolite flux, as might the gaps between assembled homohexamers. Homohexamers make sheets that probably form the facets of the polyhedral carboxysome. This subunit probably makes both homohexamers and heterohexamers with CcmK3. This is Carboxysome shell protein CcmK4 from Synechocystis sp. (strain ATCC 27184 / PCC 6803 / Kazusa).